The primary structure comprises 350 residues: Serine-threonine kinase receptor-associated protein (350 aa).

7 WD repeats span residues 12–56 (GHTR…GTFL), 57–96 (GHKG…ELMT), 98–137 (AHKH…AEPK), 141–179 (GHTS…EVKS), 180–212 (LNFN…HSAV), 221–262 (EAPA…ESYK), and 263–302 (GHFG…TYGL). A phosphoserine mark is found at Ser-312, Ser-335, and Ser-338. A disordered region spans residues 326-350 (AEEELEEIASENSDSIYSSTPEVKA). Polar residues predominate over residues 337-350 (NSDSIYSSTPEVKA). Tyr-342 is modified (phosphotyrosine).

The protein belongs to the WD repeat STRAP family. Part of the core SMN complex that contains SMN1, GEMIN2/SIP1, DDX20/GEMIN3, GEMIN4, GEMIN5, GEMIN6, GEMIN7, GEMIN8 and STRAP/UNRIP. Part of the SMN-Sm complex that contains SMN1, GEMIN2/SIP1, DDX20/GEMIN3, GEMIN4, GEMIN5, GEMIN6, GEMIN7, GEMIN8, STRAP/UNRIP and the Sm proteins SNRPB, SNRPD1, SNRPD2, SNRPD3, SNRPE, SNRPF and SNRPG. Interacts directly with GEMIN6 and GEMIN7. Associates with the SMN complex in the cytoplasm but not in the nucleus. Also interacts with CSDE1/UNR and MAWBP. Interacts with PDPK1. Interacts with TRIM48.

Its subcellular location is the cytoplasm. It localises to the nucleus. Functionally, the SMN complex catalyzes the assembly of small nuclear ribonucleoproteins (snRNPs), the building blocks of the spliceosome, and thereby plays an important role in the splicing of cellular pre-mRNAs. Most spliceosomal snRNPs contain a common set of Sm proteins SNRPB, SNRPD1, SNRPD2, SNRPD3, SNRPE, SNRPF and SNRPG that assemble in a heptameric protein ring on the Sm site of the small nuclear RNA to form the core snRNP (Sm core). In the cytosol, the Sm proteins SNRPD1, SNRPD2, SNRPE, SNRPF and SNRPG are trapped in an inactive 6S pICln-Sm complex by the chaperone CLNS1A that controls the assembly of the core snRNP. To assemble core snRNPs, the SMN complex accepts the trapped 5Sm proteins from CLNS1A forming an intermediate. Binding of snRNA inside 5Sm triggers eviction of the SMN complex, thereby allowing binding of SNRPD3 and SNRPB to complete assembly of the core snRNP. STRAP plays a role in the cellular distribution of the SMN complex. Negatively regulates TGF-beta signaling but positively regulates the PDPK1 kinase activity by enhancing its autophosphorylation and by significantly reducing the association of PDPK1 with 14-3-3 protein. The protein is Serine-threonine kinase receptor-associated protein (Strap) of Rattus norvegicus (Rat).